The following is a 708-amino-acid chain: MEMACRVINRRRHVGLQQLLSFAQTGRSFLGPVKATKFITDAECHESVLISSTVRLLEGLDLTCAVGHLLNEAVQAQNNTYKIGTSTLLFLVGAWSRAVEDCLHLGIPTTVIVSVMSEGLNSCIEAVVSLQVPIHNVFDHMDNTSTVYKLETVNATLCPFLQDPSGSGLLQEKRDFKDATSPLLSTYSLSGRHAESPKFFKPQNNLETEKNTLQVLKNNLYTDSFCKKSALAHSRHFNRTDNSHWISRHDGFLEQLESTPKVLRCNDFGELAVGLSHGDHSSMALAKAAVRLQWQSLCLQQANWMAPFMFDISRLLTCCIPGLPETFSRVGLGYVTFVTMSSITLIKELQDQPFRVILIEGDLTESYRHLGFNKSVNIKTKLDSGELSEDSAEELWTNHVLQVLIQFNVTLILVQGSVSEHLTEKCMHSKRLVIGAVNGSVLQAFAEATRAVPVAYVTQVNEDCVGSGVSVTFWMSPHDINRSNRIAILLTAEGINLITAVLTSPASAQMETKEDRFWSCVYRLYHALKEEKVFLGGGAVEFLCLSHLQILAEQSLNRGNHACLGWLPDSSSWMASSLSVYRPTVLKSLAGGWHEFLSAIMCNTATHPSAVEARTFIQQHVQNAIDSGSPSSYILSEYSKLSSGVFHSGISDNLELVPRVYDTVTPKIEAWRRALDVVLLVLQTDSEIITGLVHTEMNSQELDGVLFL.

This sequence belongs to the TCP-1 chaperonin family. BBS12 subfamily. Component of the chaperonin-containing T-complex (TRiC), a heterooligomeric complex of about 850 to 900 kDa that forms two stacked rings, 12 to 16 nm in diameter. Interacts with MKKS.

Its subcellular location is the cell projection. It localises to the cilium. Component of the chaperonin-containing T-complex (TRiC), a molecular chaperone complex that assists the folding of proteins upon ATP hydrolysis. As part of the TRiC complex may play a role in the assembly of BBSome, a complex involved in ciliogenesis regulating transports vesicles to the cilia. Involved in adipogenic differentiation. This Mus musculus (Mouse) protein is Chaperonin-containing T-complex member BBS12 (Bbs12).